A 101-amino-acid polypeptide reads, in one-letter code: Urease subunit beta (101 aa).

The protein belongs to the urease beta subunit family. In terms of assembly, heterotrimer of UreA (gamma), UreB (beta) and UreC (alpha) subunits. Three heterotrimers associate to form the active enzyme.

It is found in the cytoplasm. It catalyses the reaction urea + 2 H2O + H(+) = hydrogencarbonate + 2 NH4(+). The protein operates within nitrogen metabolism; urea degradation; CO(2) and NH(3) from urea (urease route): step 1/1. In Leptothrix cholodnii (strain ATCC 51168 / LMG 8142 / SP-6) (Leptothrix discophora (strain SP-6)), this protein is Urease subunit beta.